Reading from the N-terminus, the 235-residue chain is Cytochrome c-554 (235 aa).

A signal peptide spans 1 to 24 (MKIMIACGLVAAALFTLTSGQSLA). Residues cysteine 35, cysteine 38, histidine 39, histidine 51, cysteine 84, cysteine 87, histidine 88, cysteine 112, cysteine 115, histidine 116, histidine 126, cysteine 158, cysteine 161, histidine 162, and histidine 203 each coordinate heme. The interval 121–144 (NFRGDHRKSGQAFEKSGKKTPRKD) is disordered.

Binds 4 heme groups per subunit.

The protein localises to the periplasm. Involved in ammonia oxidation; accepts electrons directly from hydroxylamine oxidoreductase (HAO). The sequence is that of Cytochrome c-554 (cycA1) from Nitrosomonas europaea (strain ATCC 19718 / CIP 103999 / KCTC 2705 / NBRC 14298).